The chain runs to 343 residues: Biotin synthase (343 aa).

The Radical SAM core domain occupies 64–291; that stretch reads NTVQLSTLLS…RAMVRLSAGR (228 aa). [4Fe-4S] cluster-binding residues include Cys79, Cys83, and Cys86. The [2Fe-2S] cluster site is built by Cys123, Cys154, Cys214, and Arg286.

Belongs to the radical SAM superfamily. Biotin synthase family. In terms of assembly, homodimer. The cofactor is [4Fe-4S] cluster. [2Fe-2S] cluster serves as cofactor.

The enzyme catalyses (4R,5S)-dethiobiotin + (sulfur carrier)-SH + 2 reduced [2Fe-2S]-[ferredoxin] + 2 S-adenosyl-L-methionine = (sulfur carrier)-H + biotin + 2 5'-deoxyadenosine + 2 L-methionine + 2 oxidized [2Fe-2S]-[ferredoxin]. The protein operates within cofactor biosynthesis; biotin biosynthesis; biotin from 7,8-diaminononanoate: step 2/2. Functionally, catalyzes the conversion of dethiobiotin (DTB) to biotin by the insertion of a sulfur atom into dethiobiotin via a radical-based mechanism. The protein is Biotin synthase of Cupriavidus necator (strain ATCC 17699 / DSM 428 / KCTC 22496 / NCIMB 10442 / H16 / Stanier 337) (Ralstonia eutropha).